A 245-amino-acid chain; its full sequence is tRNA (guanine-N(1)-)-methyltransferase (245 aa).

Residues G111 and M131 to L136 each bind S-adenosyl-L-methionine.

It belongs to the RNA methyltransferase TrmD family. Homodimer.

Its subcellular location is the cytoplasm. It catalyses the reaction guanosine(37) in tRNA + S-adenosyl-L-methionine = N(1)-methylguanosine(37) in tRNA + S-adenosyl-L-homocysteine + H(+). In terms of biological role, specifically methylates guanosine-37 in various tRNAs. This chain is tRNA (guanine-N(1)-)-methyltransferase, found in Staphylococcus aureus (strain Mu3 / ATCC 700698).